The chain runs to 294 residues: Putative S-adenosyl-L-methionine-dependent methyltransferase RHA1_ro00605 (294 aa).

S-adenosyl-L-methionine-binding positions include aspartate 120 and 149–150; that span reads DL.

This sequence belongs to the UPF0677 family.

Exhibits S-adenosyl-L-methionine-dependent methyltransferase activity. This Rhodococcus jostii (strain RHA1) protein is Putative S-adenosyl-L-methionine-dependent methyltransferase RHA1_ro00605.